Reading from the N-terminus, the 534-residue chain is Probable bifunctional tRNA threonylcarbamoyladenosine biosynthesis protein (534 aa).

The segment at 1–324 (MICLGIEGTA…YRTDQVEVTW (324 aa)) is kae1. Residues H108, H112, and Y129 each coordinate Fe cation. Residues 129 to 133 (YTSGG), D161, G174, E178, and N258 each bind L-threonylcarbamoyladenylate. A Fe cation-binding site is contributed by D286. A Protein kinase domain is found at 335–534 (LPDNIKEKGA…DEIEKRGRYL (200 aa)). Residues 340–348 (KEKGAEADI) and K361 contribute to the ATP site. D455 functions as the Proton acceptor; for kinase activity in the catalytic mechanism.

In the N-terminal section; belongs to the KAE1 / TsaD family. This sequence in the C-terminal section; belongs to the protein kinase superfamily. Tyr protein kinase family. BUD32 subfamily. In terms of assembly, component of the KEOPS complex that consists of Kae1, Bud32, Cgi121 and Pcc1; the whole complex dimerizes. Requires Fe(2+) as cofactor.

Its subcellular location is the cytoplasm. The enzyme catalyses L-seryl-[protein] + ATP = O-phospho-L-seryl-[protein] + ADP + H(+). The catalysed reaction is L-threonyl-[protein] + ATP = O-phospho-L-threonyl-[protein] + ADP + H(+). It carries out the reaction L-threonylcarbamoyladenylate + adenosine(37) in tRNA = N(6)-L-threonylcarbamoyladenosine(37) in tRNA + AMP + H(+). Its function is as follows. Required for the formation of a threonylcarbamoyl group on adenosine at position 37 (t(6)A37) in tRNAs that read codons beginning with adenine. Is a component of the KEOPS complex that is probably involved in the transfer of the threonylcarbamoyl moiety of threonylcarbamoyl-AMP (TC-AMP) to the N6 group of A37. The Kae1 domain likely plays a direct catalytic role in this reaction. The Bud32 domain probably displays kinase activity that regulates Kae1 function. This is Probable bifunctional tRNA threonylcarbamoyladenosine biosynthesis protein from Methanosphaera stadtmanae (strain ATCC 43021 / DSM 3091 / JCM 11832 / MCB-3).